The chain runs to 75 residues: Small ribosomal subunit protein bS18c (75 aa).

This sequence belongs to the bacterial ribosomal protein bS18 family. In terms of assembly, part of the 30S ribosomal subunit.

The protein resides in the plastid. Its subcellular location is the chloroplast. The chain is Small ribosomal subunit protein bS18c (rps18) from Marchantia polymorpha (Common liverwort).